Reading from the N-terminus, the 91-residue chain is Small ribosomal subunit protein uS19 (91 aa).

Belongs to the universal ribosomal protein uS19 family.

In terms of biological role, protein S19 forms a complex with S13 that binds strongly to the 16S ribosomal RNA. This chain is Small ribosomal subunit protein uS19, found in Synechococcus sp. (strain WH7803).